Here is a 268-residue protein sequence, read N- to C-terminus: GTP cyclohydrolase III (268 aa).

It belongs to the archaeal-type GTP cyclohydrolase family. Homotrimer. The cofactor is Mg(2+).

It catalyses the reaction GTP + 3 H2O = 2-amino-5-formylamino-6-(5-phospho-D-ribosylamino)pyrimidin-4(3H)-one + 2 phosphate + 2 H(+). Its function is as follows. Catalyzes the formation of 2-amino-5-formylamino-6-ribofuranosylamino-4(3H)-pyrimidinone ribonucleotide monophosphate and inorganic phosphate from GTP. Also has an independent pyrophosphate phosphohydrolase activity. The polypeptide is GTP cyclohydrolase III (gch3) (Methanocaldococcus jannaschii (strain ATCC 43067 / DSM 2661 / JAL-1 / JCM 10045 / NBRC 100440) (Methanococcus jannaschii)).